An 842-amino-acid polypeptide reads, in one-letter code: Leucine--tRNA ligase (842 aa).

A 'HIGH' region motif is present at residues 62–72 (PYPSGDLHMGH). The disordered stretch occupies residues 390–414 (GDEDPAETGVATAGEGTLKNSGELD). Positions 607 to 611 (AMSKS) match the 'KMSKS' region motif. Lysine 610 serves as a coordination point for ATP.

This sequence belongs to the class-I aminoacyl-tRNA synthetase family.

It localises to the cytoplasm. It catalyses the reaction tRNA(Leu) + L-leucine + ATP = L-leucyl-tRNA(Leu) + AMP + diphosphate. The polypeptide is Leucine--tRNA ligase (Paenarthrobacter aurescens (strain TC1)).